The primary structure comprises 2498 residues: Nuclear receptor corepressor 1 (2498 aa).

4 disordered regions span residues 1–38, 54–84, 134–169, and 198–223; these read MSSS…QQEY, IQQQ…SGYD, SEVK…SKLS, and QQQL…VEQK. Basic and acidic residues-rich tracts occupy residues 71-82, 134-148, and 204-213; these read PVSDRPQDRRSG, SEVK…KHES, and EAAKPPEPEK. The interaction with tbl1xr1-A stretch occupies residues 154-304; sequence SGQPGDDQDA…REQNICQRYD (151 aa). Positions 168 to 208 form a coiled coil; the sequence is LSKEELIQSMDRVDREIAKVEQQILKLKKKQQQLEEEAAKP. The 52-residue stretch at 427-478 folds into the SANT 1 domain; the sequence is QFMNVWTDHEKEIFKEKFVRHPKNFGLIASYLERKNVSDCVLYYYLTKKNEN. Basic residues predominate over residues 483-493; it reads VRRNYPKRRGR. Disordered regions lie at residues 483 to 649, 668 to 912, 1075 to 1122, 1417 to 1436, 1470 to 1583, 1737 to 1851, and 1916 to 1990; these read VRRN…GSKS, NLLQ…FGSR, SLSD…GTPG, DLVS…IMEG, SWGV…QRES, PGTQ…AQES, and PQME…TAHT. Basic and acidic residues-rich tracts occupy residues 502–525 and 535–548; these read SQEE…KEDE and KEEL…KIDA. Residues 502-552 are a coiled coil; it reads SQEEKEIEKVEEEKADRNDKKEDERREEEEKEEKEELREGAKDKIDAVAED. The span at 582–611 shows a compositional bias: low complexity; the sequence is ASEAAAANAVTTATTAPVTTTSTATTVAPV. A compositionally biased stretch (pro residues) spans 612–627; that stretch reads PVAPPPEEPTPPPPPQ. Residues 628–665 enclose the SANT 2 domain; it reads EQSLVDHGRNWGAIAKMVGSKSESQCKNFYFNYKRRHN. Over residues 689–699 the composition is skewed to polar residues; the sequence is QCDSIASTVSA. Residues 700 to 719 show a composition bias toward acidic residues; it reads QEDDENEASNEEENPEDSEG. Low complexity-rich tracts occupy residues 727–738 and 761–774; these read ESAPSPSPAEAA and DAAS…SPSP. Positions 854-863 are enriched in basic and acidic residues; that stretch reads MERLMDRAEA. 2 stretches are compositionally biased toward polar residues: residues 872 to 891 and 1102 to 1122; these read QNIS…SATC and ATSS…GTPG. A compositionally biased stretch (basic and acidic residues) spans 1484–1501; that stretch reads KMGERSKHEDTKSSDAIR. Residues 1505–1516 show a composition bias toward polar residues; it reads TSVVSSGPSVLR. Over residues 1545–1558 the composition is skewed to low complexity; it reads PSPMSRSSPMARSA. Positions 1765-1804 form a coiled coil; the sequence is VSAERERERERERERDREREKEQRERESDRERERDRLAHA. The span at 1767–1802 shows a compositional bias: basic and acidic residues; the sequence is AERERERERERERDREREKEQRERESDRERERDRLA. 2 stretches are compositionally biased toward low complexity: residues 1803–1813 and 1820–1835; these read HAAAAAAAASA and RPVS…RPSS. Residues 1842 to 1851 are compositionally biased toward polar residues; the sequence is PSPSVRAQES. Basic and acidic residues predominate over residues 1921–1942; that stretch reads AKPKESKNDSARSEENLSRRNA. Positions 1958–1980 are enriched in low complexity; the sequence is SPYTSSSFSSSKSQSQPSSAVYS. Residues 2012 to 2016 carry the CORNR box 1 motif; that stretch reads IDVII. The disordered stretch occupies residues 2022-2109; the sequence is SDKDGRERNS…SPPQQTIPGH (88 aa). Positions 2031 to 2040 are enriched in low complexity; that stretch reads SQSSDASSSH. A compositionally biased stretch (basic and acidic residues) spans 2043–2052; it reads HRYEAPRETI. The segment covering 2093–2106 has biased composition (polar residues); that stretch reads RYRQQQESPPQQTI. The CORNR box 2 signature appears at 2123–2127; that stretch reads ICHII. Residues 2136-2145 show a composition bias toward low complexity; that stretch reads PVNQPLQQPP. Residues 2136-2222 are disordered; the sequence is PVNQPLQQPP…PISPPQAPML (87 aa). Over residues 2146–2175 the composition is skewed to polar residues; that stretch reads ASTFQSTNPTSTAVRTKASSRFSPESQVQP. Basic and acidic residues predominate over residues 2190-2209; the sequence is IPDKPRGRPGKSPDRGHISE. Positions 2326–2330 match the CORNR box 3 motif; the sequence is LEDII. Disordered stretches follow at residues 2344–2446 and 2464–2498; these read DHGV…YNPL and TSMT…DSDE. The span at 2353–2362 shows a compositional bias: polar residues; it reads QGNQSGTPNS. Residues 2380-2394 are compositionally biased toward basic residues; it reads HKQKLISKYGSRKTK. Composition is skewed to polar residues over residues 2464–2476 and 2489–2498; these read TSMT…QQSR and QYETLSDSDE.

This sequence belongs to the N-CoR nuclear receptor corepressors family. As to quaternary structure, forms a large corepressor complex that contains sin3a/b, histone deacetylases hdac1 and hdac2, rbbp4 and possibly rbbp7. Interacts with the thyroid receptor (TR, composed of rxra and thrb) and the retinoid acid receptor (RAR, composed of rxra and rara) in the absence of ligand. Interacts with tbl1xr1-A and possibly tbl1xr1-B. Interacts with zbtb33/kaiso.

It localises to the nucleus. In terms of biological role, mediates transcriptional repression by certain nuclear receptors. Participates in complexes which promote histone deacetylation and the formation of repressive chromatin structures which may impede access by the basal transcription machinery. In association with hdac3, may play a role in the regulation of the circadian clock. This Xenopus laevis (African clawed frog) protein is Nuclear receptor corepressor 1 (ncor1).